A 1190-amino-acid polypeptide reads, in one-letter code: Pyruvate-flavodoxin oxidoreductase (1190 aa).

2 consecutive 4Fe-4S ferredoxin-type domains span residues 687-716 (EIPV…SKVY) and 743-773 (FTIQ…PRKK). [4Fe-4S] cluster-binding residues include Cys696, Cys699, Cys702, Cys706, Cys752, Cys755, Cys758, Cys762, Cys826, Cys829, Cys854, and Cys1089.

Belongs to the pyruvate:ferredoxin/flavodoxin oxidoreductase family. The cofactor is [4Fe-4S] cluster.

It carries out the reaction oxidized [flavodoxin] + pyruvate + CoA + 2 H(+) = reduced [flavodoxin] + acetyl-CoA + CO2. Functionally, oxidoreductase required for the transfer of electrons from pyruvate to flavodoxin, which reduces nitrogenase. This Trichormus variabilis (strain ATCC 29413 / PCC 7937) (Anabaena variabilis) protein is Pyruvate-flavodoxin oxidoreductase (nifJ).